We begin with the raw amino-acid sequence, 664 residues long: E3 ubiquitin-protein ligase RNF139 (664 aa).

An N-acetylalanine modification is found at alanine 2. The next 12 helical transmembrane spans lie at 51 to 71 (IVLQ…VLIL), 85 to 105 (AFLL…HIDF), 125 to 145 (SLWM…VTLL), 154 to 174 (LIIL…PLHI), 178 to 198 (LVFT…AVKL), 293 to 313 (GMSA…LAFI), 323 to 343 (LGFV…LSGL), 356 to 376 (MCLL…PVLM), 390 to 410 (FPVL…SYVL), 420 to 440 (LFAA…SLTV), 469 to 489 (SIIV…TMMF), and 495 to 512 (IRAF…YLQA). An RING-type; atypical zinc finger spans residues 547-586 (CAICYHEFTTSARITPCNHYFHALCLRKWLYIQDTCPMCH). Residues 599–610 (SNVSNNNGFTPP) are compositionally biased toward polar residues. A disordered region spans residues 599–664 (SNVSNNNGFT…AAEEFNDDTD (66 aa)). The span at 616 to 628 (EAVREAAAESDRE) shows a compositional bias: basic and acidic residues. The span at 629–639 (LNEDDSTDCDD) shows a compositional bias: acidic residues. Residue serine 634 is modified to Phosphoserine. Threonine 635 and threonine 663 each carry phosphothreonine.

Interacts with VHL. Interacts with MHC class I and HM13. Component of SCAP-SREBP complex composed of SREBF2, SCAP and RNF139; the complex hampers the interaction between SCAP and SEC24B, thereby reducing SREBF2 proteolytic processing. Interacts with SREBF2 (via C-terminal domain). Interacts with SCAP; the interaction inhibits the interaction of SCAP with SEC24B and hampering the ER to Golgi transport of the SCAP-SREBP complex. Interacts with SEC24B. Interacts with INSIG1 and INSIG2. Interacts with EIF3F and EIF3H; the interaction leads to protein translation inhibitions in a ubiquitination-dependent manner. Interacts with XBP1; the interaction induces ubiquitination and degradation of XBP1. Interacts with AUP1, AMFR and UBE2G2; interaction with AUP1 facilitates interaction of RNF139 with ubiquitin-conjugating enzyme UBE2G2 and ubiquitin ligase AMFR/gp78, leading to sterol-induced ubiquitination of HMGCR and its subsequent proteasomal degradation. Post-translationally, autoubiquitinated. Ubiquitination is induced by sterol and leads to ist degradation via the ubiquitin-proteasome pathway.

The protein localises to the endoplasmic reticulum membrane. The catalysed reaction is S-ubiquitinyl-[E2 ubiquitin-conjugating enzyme]-L-cysteine + [acceptor protein]-L-lysine = [E2 ubiquitin-conjugating enzyme]-L-cysteine + N(6)-ubiquitinyl-[acceptor protein]-L-lysine.. It participates in protein modification; protein ubiquitination. In terms of biological role, E3-ubiquitin ligase; acts as a negative regulator of cell proliferation through mechanisms involving G2/M arrest and cell death. Required for MHC class I ubiquitination in cells expressing the cytomegalovirus protein US2 before dislocation from the endoplasmic reticulum (ER). Affects SREBP processing by hindering the SREBP-SCAP complex translocation from the ER to the Golgi, thereby reducing SREBF2 target gene expression. Involved in the sterol-accelerated degradation of HMGCR. This is achieved through binding to INSIG1 and/or INSIG2 at the ER membrane. In addition, interaction of RNF139 with AUP1 facilitates interaction of RNF139 with ubiquitin-conjugating enzyme UBE2G2 and ubiquitin ligase AMFR, leading to ubiquitination of HMGCR. The ubiquitinated HMGCR is then released from the ER by the complex into the cytosol for subsequent destruction. Required for INSIG1 ubiquitination. May be required for EIF3 complex ubiquitination. The protein is E3 ubiquitin-protein ligase RNF139 (RNF139) of Pongo abelii (Sumatran orangutan).